The primary structure comprises 101 residues: Signal recognition particle 19 kDa protein (101 aa).

Belongs to the SRP19 family. As to quaternary structure, part of the signal recognition particle protein translocation system, which is composed of SRP and FtsY. Archaeal SRP consists of a 7S RNA molecule of 300 nucleotides and two protein subunits: SRP54 and SRP19.

Its subcellular location is the cytoplasm. Involved in targeting and insertion of nascent membrane proteins into the cytoplasmic membrane. Binds directly to 7S RNA and mediates binding of the 54 kDa subunit of the SRP. This Methanosarcina barkeri (strain Fusaro / DSM 804) protein is Signal recognition particle 19 kDa protein.